We begin with the raw amino-acid sequence, 692 residues long: Elongation factor G (692 aa).

The 275-residue stretch at 8–282 (EKTRNIGIMA…AVIDYLPSPL (275 aa)) folds into the tr-type G domain. GTP contacts are provided by residues 17-24 (AHVDAGKT), 81-85 (DTPGH), and 135-138 (NKMD).

It belongs to the TRAFAC class translation factor GTPase superfamily. Classic translation factor GTPase family. EF-G/EF-2 subfamily.

The protein localises to the cytoplasm. Its function is as follows. Catalyzes the GTP-dependent ribosomal translocation step during translation elongation. During this step, the ribosome changes from the pre-translocational (PRE) to the post-translocational (POST) state as the newly formed A-site-bound peptidyl-tRNA and P-site-bound deacylated tRNA move to the P and E sites, respectively. Catalyzes the coordinated movement of the two tRNA molecules, the mRNA and conformational changes in the ribosome. The chain is Elongation factor G from Streptococcus agalactiae serotype Ia (strain ATCC 27591 / A909 / CDC SS700).